Reading from the N-terminus, the 126-residue chain is Small ribosomal subunit protein uS13c (126 aa).

Residues 97 to 126 (PLRGQRTRTNARTRRGGKKTVAGKKKAPRK) are disordered. A compositionally biased stretch (basic residues) spans 101–126 (QRTRTNARTRRGGKKTVAGKKKAPRK).

It belongs to the universal ribosomal protein uS13 family. In terms of assembly, part of the 30S ribosomal subunit.

It is found in the plastid. Its subcellular location is the chloroplast. Functionally, located at the top of the head of the 30S subunit, it contacts several helices of the 16S rRNA. In Pyropia yezoensis (Susabi-nori), this protein is Small ribosomal subunit protein uS13c.